A 500-amino-acid polypeptide reads, in one-letter code: Protein adenylyltransferase Fic (500 aa).

The helical transmembrane segment at 39 to 59 (LSFLIFFVIGSLFSGLMFALL) threads the bilayer. TPR repeat units follow at residues 122–155 (ALSS…SPRH) and 156–190 (PEIL…NPSH). Residues 247–252 (SVGIEG) carry the Inhibitory (S/T)XXXE(G/N) motif motif. ATP contacts are provided by residues E251 and 333-336 (VGGH). The Fido domain occupies 302–437 (ITLKDLLEIH…IRPFVRFIAD (136 aa)). H380 is a catalytic residue. Residues 384–391 (DGNGRTSR), 416–417 (YY), and N424 contribute to the ATP site. The tract at residues 477 to 500 (GREGGSTVHEGSGTGDSIRIGTMW) is disordered.

It belongs to the fic family. Homodimer.

It localises to the membrane. It carries out the reaction L-tyrosyl-[protein] + ATP = O-(5'-adenylyl)-L-tyrosyl-[protein] + diphosphate. The enzyme catalyses L-threonyl-[protein] + ATP = 3-O-(5'-adenylyl)-L-threonyl-[protein] + diphosphate. The catalysed reaction is 3-O-(5'-adenylyl)-L-threonyl-[protein] + H2O = L-threonyl-[protein] + AMP + H(+). Its activity is regulated as follows. The side chain of Glu-251 determines which of the two opposing activities (AMPylase or de-AMPylase) will take place. In response to endoplasmic reticulum stress, mediates de-AMPylase activity. Adenylyltransferase activity is inhibited by the inhibitory helix present at the N-terminus: Glu-251 binds ATP and competes with ATP-binding at Arg-391, thereby preventing adenylyltransferase activity. In unstressed cells, disengagement of Glu-251 promotes adenylyltransferase activity. Activation dissociates ATP-binding from Glu-251, allowing ordered binding of the entire ATP moiety with the alpha-phosphate in an orientation that is productive for accepting an incoming target hydroxyl side chain. Protein that can both mediate the addition of adenosine 5'-monophosphate (AMP) to specific residues of target proteins (AMPylation), and the removal of the same modification from target proteins (de-AMPylation), depending on the context. The side chain of Glu-251 determines which of the two opposing activities (AMPylase or de-AMPylase) will take place. Acts as a key regulator of the unfolded protein response (UPR) by mediating AMPylation or de-AMPylation of Hsc70-3/BiP. In unstressed cells, acts as an adenylyltransferase by mediating AMPylation of Hsc70-3/BiP at 'Thr-518', thereby inactivating it. In response to endoplasmic reticulum stress, acts as a phosphodiesterase by mediating removal of ATP (de-AMPylation) from Hsc70-3/BiP at 'Thr-518', leading to restore HSPA5/BiP activity. This is Protein adenylyltransferase Fic from Culex quinquefasciatus (Southern house mosquito).